A 111-amino-acid polypeptide reads, in one-letter code: WAP four-disulfide core domain protein 12 (111 aa).

Positions 1 to 23 (MGSSSFLVLMVSLTLVTLVAAEG) are cleaved as a signal peptide. The 48-residue stretch at 27 to 74 (GIEKAGVCPADNVRCFKSDPPQCHTDQDCLGERKCCYLHCGFKCVIPV) folds into the WAP domain. Cystine bridges form between cysteine 34–cysteine 62, cysteine 41–cysteine 66, cysteine 49–cysteine 61, and cysteine 55–cysteine 70. Positions 80–111 (GGNKDEDVSGPCPEPGWEAKSPGSSSTGCPQK) are disordered. The span at 101 to 111 (PGSSSTGCPQK) shows a compositional bias: polar residues.

It localises to the secreted. Antibacterial protein. Putative acid-stable proteinase inhibitor. This is WAP four-disulfide core domain protein 12 (WFDC12) from Chlorocebus aethiops (Green monkey).